We begin with the raw amino-acid sequence, 302 residues long: 33 kDa chaperonin (302 aa).

Intrachain disulfides connect cysteine 240/cysteine 242 and cysteine 273/cysteine 276.

It belongs to the HSP33 family. In terms of processing, under oxidizing conditions two disulfide bonds are formed involving the reactive cysteines. Under reducing conditions zinc is bound to the reactive cysteines and the protein is inactive.

It localises to the cytoplasm. In terms of biological role, redox regulated molecular chaperone. Protects both thermally unfolding and oxidatively damaged proteins from irreversible aggregation. Plays an important role in the bacterial defense system toward oxidative stress. The sequence is that of 33 kDa chaperonin from Synechocystis sp. (strain ATCC 27184 / PCC 6803 / Kazusa).